The sequence spans 249 residues: MARYDRAITVFSPDGHLFQVEYALEAVRKGNAAVGVRGSDTVVLGVEKKSTPKLQDSRSVRKIASLDTHIALACAGLKADARVLINRARVECQSHRLTVEDAVTVEYITRYIAGLQQKYTQSGGVRPFGLSTLIVGFDPYTDKPALYQTDPSGTFSAWKANATGRNSNSMREFLEKNYKETSGKETIKLAIRALLEVVESGGKNIEIAVMTQKDGLRQLEEAEIDEYVAEIEAEKAAAEAAKKGAPKET.

The protein belongs to the peptidase T1A family. In terms of assembly, the 26S proteasome consists of a 20S proteasome core and two 19S regulatory subunits. The 20S proteasome core is composed of 28 subunits that are arranged in four stacked rings, resulting in a barrel-shaped structure. The two end rings are each formed by seven alpha subunits, and the two central rings are each formed by seven beta subunits. The catalytic chamber with the active sites is on the inside of the barrel.

It localises to the cytoplasm. It is found in the nucleus. Functionally, the proteasome is a multicatalytic proteinase complex which is characterized by its ability to cleave peptides with Arg, Phe, Tyr, Leu, and Glu adjacent to the leaving group at neutral or slightly basic pH. The proteasome has an ATP-dependent proteolytic activity. In Oryza sativa subsp. indica (Rice), this protein is Proteasome subunit alpha type-7-B (PAD1).